The sequence spans 163 residues: Small ribosomal subunit protein bS6 (163 aa).

Residues 97–163 are disordered; sequence EEGQTAMLTN…GRNEGEGDRA (67 aa). A compositionally biased stretch (basic and acidic residues) spans 122-163; it reads RGPRRDFGDRGPRRDFGDRGPRRDGDGPRAEGGRNEGEGDRA.

It belongs to the bacterial ribosomal protein bS6 family.

Its function is as follows. Binds together with bS18 to 16S ribosomal RNA. This is Small ribosomal subunit protein bS6 from Rhodospirillum centenum (strain ATCC 51521 / SW).